Here is a 563-residue protein sequence, read N- to C-terminus: Probable tRNA (uracil-O(2)-)-methyltransferase (563 aa).

The C3H1-type zinc finger occupies 536-563 (TIRKAPCWMSLHHPDGCPVGQEACRYEH).

The protein belongs to the TRM44 family.

Its subcellular location is the cytoplasm. The catalysed reaction is uridine(44) in tRNA(Ser) + S-adenosyl-L-methionine = 2'-O-methyluridine(44) in tRNA(Ser) + S-adenosyl-L-homocysteine + H(+). Its function is as follows. Probable adenosyl-L-methionine (AdoMet)-dependent tRNA (uracil-O(2)-)-methyltransferase. This Caenorhabditis elegans protein is Probable tRNA (uracil-O(2)-)-methyltransferase.